A 227-amino-acid polypeptide reads, in one-letter code: Uracil phosphoribosyltransferase (227 aa).

Position 36 to 40 (36 to 40 (KGLVK)) interacts with GTP. 5-phospho-alpha-D-ribose 1-diphosphate-binding positions include Arg-86, Arg-111, and 145–153 (DPMLATGST). Residues Ile-212 and 217-219 (GDA) each bind uracil. 5-phospho-alpha-D-ribose 1-diphosphate is bound at residue Asp-218.

It belongs to the UPRTase family. Requires Mg(2+) as cofactor.

The enzyme catalyses UMP + diphosphate = 5-phospho-alpha-D-ribose 1-diphosphate + uracil. Its pathway is pyrimidine metabolism; UMP biosynthesis via salvage pathway; UMP from uracil: step 1/1. Allosterically activated by GTP. In terms of biological role, catalyzes the conversion of uracil and 5-phospho-alpha-D-ribose 1-diphosphate (PRPP) to UMP and diphosphate. This chain is Uracil phosphoribosyltransferase, found in Halobacterium salinarum (strain ATCC 700922 / JCM 11081 / NRC-1) (Halobacterium halobium).